A 184-amino-acid polypeptide reads, in one-letter code: Protein YrdA (184 aa).

The protein belongs to the gamma-class carbonic anhydrase family.

This chain is Protein YrdA (yrdA), found in Escherichia coli (strain K12).